Reading from the N-terminus, the 308-residue chain is Cytochrome b (308 aa).

4 consecutive transmembrane segments (helical) span residues 1-21, 45-66, 81-101, and 146-166; these read FGSL…LMAM, WLIR…YLHI, WNTG…GYVL, and FFAL…VHLT. Residues His-51 and His-65 each contribute to the heme b site. 2 residues coordinate heme b: His-150 and His-164. A ubiquinone is bound at residue His-169. The next 3 helical transmembrane spans lie at 194–214, 256–276, and 288–308; these read IKDI…AMFS, LGGV…PFLH, and LSQL…WVGS.

Belongs to the cytochrome b family. As to quaternary structure, the cytochrome bc1 complex contains 11 subunits: 3 respiratory subunits (MT-CYB, CYC1 and UQCRFS1), 2 core proteins (UQCRC1 and UQCRC2) and 6 low-molecular weight proteins (UQCRH/QCR6, UQCRB/QCR7, UQCRQ/QCR8, UQCR10/QCR9, UQCR11/QCR10 and a cleavage product of UQCRFS1). This cytochrome bc1 complex then forms a dimer. Requires heme b as cofactor.

Its subcellular location is the mitochondrion inner membrane. In terms of biological role, component of the ubiquinol-cytochrome c reductase complex (complex III or cytochrome b-c1 complex) that is part of the mitochondrial respiratory chain. The b-c1 complex mediates electron transfer from ubiquinol to cytochrome c. Contributes to the generation of a proton gradient across the mitochondrial membrane that is then used for ATP synthesis. The sequence is that of Cytochrome b (MT-CYB) from Scytalopus magellanicus (Magellanic tapaculo).